Here is a 204-residue protein sequence, read N- to C-terminus: Large ribosomal subunit protein bL25 (204 aa).

The protein belongs to the bacterial ribosomal protein bL25 family. CTC subfamily. In terms of assembly, part of the 50S ribosomal subunit; part of the 5S rRNA/L5/L18/L25 subcomplex. Contacts the 5S rRNA. Binds to the 5S rRNA independently of L5 and L18.

Its function is as follows. This is one of the proteins that binds to the 5S RNA in the ribosome where it forms part of the central protuberance. The sequence is that of Large ribosomal subunit protein bL25 from Pseudomonas paraeruginosa (strain DSM 24068 / PA7) (Pseudomonas aeruginosa (strain PA7)).